The following is a 444-amino-acid chain: Methylenetetrahydrofolate--tRNA-(uracil-5-)-methyltransferase TrmFO (444 aa).

Position 10-15 (10-15 (GAGLAG)) interacts with FAD.

This sequence belongs to the MnmG family. TrmFO subfamily. The cofactor is FAD.

The protein resides in the cytoplasm. It catalyses the reaction uridine(54) in tRNA + (6R)-5,10-methylene-5,6,7,8-tetrahydrofolate + NADH + H(+) = 5-methyluridine(54) in tRNA + (6S)-5,6,7,8-tetrahydrofolate + NAD(+). The catalysed reaction is uridine(54) in tRNA + (6R)-5,10-methylene-5,6,7,8-tetrahydrofolate + NADPH + H(+) = 5-methyluridine(54) in tRNA + (6S)-5,6,7,8-tetrahydrofolate + NADP(+). In terms of biological role, catalyzes the folate-dependent formation of 5-methyl-uridine at position 54 (M-5-U54) in all tRNAs. In Streptococcus agalactiae serotype Ia (strain ATCC 27591 / A909 / CDC SS700), this protein is Methylenetetrahydrofolate--tRNA-(uracil-5-)-methyltransferase TrmFO.